The chain runs to 68 residues: Large ribosomal subunit protein eL24 (68 aa).

Zn(2+) is bound by residues Cys-7, Cys-10, Cys-33, and Cys-37. A C4-type zinc finger spans residues 7–37 (CSYCGREFEPGTGKMFVRNDGRVLFFCSSKC).

It belongs to the eukaryotic ribosomal protein eL24 family. In terms of assembly, part of the 50S ribosomal subunit. Forms a cluster with proteins L3 and L14. It depends on Zn(2+) as a cofactor.

Binds to the 23S rRNA. This is Large ribosomal subunit protein eL24 from Thermococcus gammatolerans (strain DSM 15229 / JCM 11827 / EJ3).